A 128-amino-acid chain; its full sequence is Glycine cleavage system H protein (128 aa).

A Lipoyl-binding domain is found at 22 to 104 (TVLVGITDYA…YGEGWIFRLK (83 aa)). Lys-63 is modified (N6-lipoyllysine).

The protein belongs to the GcvH family. In terms of assembly, the glycine cleavage system is composed of four proteins: P, T, L and H. (R)-lipoate serves as cofactor.

In terms of biological role, the glycine cleavage system catalyzes the degradation of glycine. The H protein shuttles the methylamine group of glycine from the P protein to the T protein. The polypeptide is Glycine cleavage system H protein (Thermus thermophilus (strain ATCC BAA-163 / DSM 7039 / HB27)).